We begin with the raw amino-acid sequence, 224 residues long: Large ribosomal subunit protein bL25 (224 aa).

Residues 190 to 224 are disordered; that stretch reads EPAPAAEGAAPAEGAAAAAAGGKPAAKTAKPAAKK.

The protein belongs to the bacterial ribosomal protein bL25 family. CTC subfamily. In terms of assembly, part of the 50S ribosomal subunit; part of the 5S rRNA/L5/L18/L25 subcomplex. Contacts the 5S rRNA. Binds to the 5S rRNA independently of L5 and L18.

Functionally, this is one of the proteins that binds to the 5S RNA in the ribosome where it forms part of the central protuberance. The chain is Large ribosomal subunit protein bL25 from Variovorax paradoxus (strain S110).